A 487-amino-acid polypeptide reads, in one-letter code: GTPase Der (487 aa).

2 EngA-type G domains span residues 3-167 (FTLA…EGFA) and 203-378 (LQIA…DIWN). Residues 9–16 (GRPNVGKS), 56–60 (DTAGL), 119–122 (NKAE), 209–216 (GRPNAGKS), 256–260 (DTAGM), and 321–324 (NKWD) each bind GTP. A KH-like domain is found at 379–463 (RRITTARLNT…PIRLTMRGQG (85 aa)). A disordered region spans residues 451–487 (PGTPIRLTMRGQGDKNPFKERKFRTPSRLRKHLGKKD). The span at 471–487 (RKFRTPSRLRKHLGKKD) shows a compositional bias: basic residues.

It belongs to the TRAFAC class TrmE-Era-EngA-EngB-Septin-like GTPase superfamily. EngA (Der) GTPase family. In terms of assembly, associates with the 50S ribosomal subunit.

Its function is as follows. GTPase that plays an essential role in the late steps of ribosome biogenesis. This is GTPase Der from Cereibacter sphaeroides (strain ATCC 17029 / ATH 2.4.9) (Rhodobacter sphaeroides).